The sequence spans 227 residues: Nodulation protein W (227 aa).

Residues I21–T135 form the Response regulatory domain. D70 carries the 4-aspartylphosphate modification. The 66-residue stretch at L151 to G216 folds into the HTH luxR-type domain. The H-T-H motif DNA-binding region spans N175–G194.

Post-translationally, phosphorylated by NodV.

The protein resides in the cytoplasm. Its function is as follows. Member of the two-component regulatory system NodV/NodW probably involved in the regulation of the transcription of genes involved in the nodulation process. In Bradyrhizobium diazoefficiens (strain JCM 10833 / BCRC 13528 / IAM 13628 / NBRC 14792 / USDA 110), this protein is Nodulation protein W (nodW).